The chain runs to 60 residues: UPF0509 protein ESA_01586 (60 aa).

Belongs to the UPF0509 family.

The chain is UPF0509 protein ESA_01586 from Cronobacter sakazakii (strain ATCC BAA-894) (Enterobacter sakazakii).